A 498-amino-acid polypeptide reads, in one-letter code: Glycerol kinase (498 aa).

T12 contacts ADP. 3 residues coordinate ATP: T12, T13, and S14. T12 serves as a coordination point for sn-glycerol 3-phosphate. R16 contacts ADP. Positions 82, 83, and 134 each coordinate sn-glycerol 3-phosphate. The glycerol site is built by R82, E83, and Y134. H230 carries the post-translational modification Phosphohistidine; by HPr. Sn-glycerol 3-phosphate is bound at residue D244. 2 residues coordinate glycerol: D244 and Q245. ADP is bound by residues T266 and G309. 4 residues coordinate ATP: T266, G309, Q313, and G410. ADP is bound by residues G410 and N414.

It belongs to the FGGY kinase family. As to quaternary structure, homotetramer and homodimer (in equilibrium). The phosphoenolpyruvate-dependent sugar phosphotransferase system (PTS), including enzyme I, and histidine-containing protein (HPr) are required for the phosphorylation, which leads to the activation of the enzyme.

The enzyme catalyses glycerol + ATP = sn-glycerol 3-phosphate + ADP + H(+). The protein operates within polyol metabolism; glycerol degradation via glycerol kinase pathway; sn-glycerol 3-phosphate from glycerol: step 1/1. With respect to regulation, activated by phosphorylation and inhibited by fructose 1,6-bisphosphate (FBP). Its function is as follows. Key enzyme in the regulation of glycerol uptake and metabolism. Catalyzes the phosphorylation of glycerol to yield sn-glycerol 3-phosphate. The protein is Glycerol kinase of Staphylococcus aureus (strain MW2).